Consider the following 264-residue polypeptide: MRNIHATAVIGSGAVLGEGVEIGPYTVIEDDVVIGDRTVIGPHVHIADGARIGNECRISTGAVLATAPQDLKYAGEKTYLHIGDRTVIRECVTLNRGTKASGKTVVGSDNLIMAYVHAGHDCVIGNHVVIANSVQFGGHCHVGDYVVVGGLAGVHQXVRIGRYAMVGGISRAALDVPPFVMAGGHASFRYEGLNVIGLKRRGFTSEQLGNIRDAYRIIFQSGLLLSKALEAVRNDLPQTPEVVEILDFFASGVYNRKFLKPFNS.

The protein belongs to the transferase hexapeptide repeat family. LpxA subfamily. As to quaternary structure, homotrimer.

The protein resides in the cytoplasm. The enzyme catalyses a (3R)-hydroxyacyl-[ACP] + UDP-N-acetyl-alpha-D-glucosamine = a UDP-3-O-[(3R)-3-hydroxyacyl]-N-acetyl-alpha-D-glucosamine + holo-[ACP]. It functions in the pathway glycolipid biosynthesis; lipid IV(A) biosynthesis; lipid IV(A) from (3R)-3-hydroxytetradecanoyl-[acyl-carrier-protein] and UDP-N-acetyl-alpha-D-glucosamine: step 1/6. Involved in the biosynthesis of lipid A, a phosphorylated glycolipid that anchors the lipopolysaccharide to the outer membrane of the cell. This is Acyl-[acyl-carrier-protein]--UDP-N-acetylglucosamine O-acyltransferase from Chlorobaculum tepidum (strain ATCC 49652 / DSM 12025 / NBRC 103806 / TLS) (Chlorobium tepidum).